We begin with the raw amino-acid sequence, 434 residues long: Enolase (434 aa).

Residue glutamine 167 coordinates (2R)-2-phosphoglycerate. Residue glutamate 209 is the Proton donor of the active site. Positions 246, 291, and 318 each coordinate Mg(2+). 4 residues coordinate (2R)-2-phosphoglycerate: lysine 343, arginine 372, serine 373, and lysine 394. Lysine 343 (proton acceptor) is an active-site residue.

The protein belongs to the enolase family. As to quaternary structure, component of the RNA degradosome, a multiprotein complex involved in RNA processing and mRNA degradation. Mg(2+) serves as cofactor.

It is found in the cytoplasm. Its subcellular location is the secreted. It localises to the cell surface. The catalysed reaction is (2R)-2-phosphoglycerate = phosphoenolpyruvate + H2O. It functions in the pathway carbohydrate degradation; glycolysis; pyruvate from D-glyceraldehyde 3-phosphate: step 4/5. In terms of biological role, catalyzes the reversible conversion of 2-phosphoglycerate (2-PG) into phosphoenolpyruvate (PEP). It is essential for the degradation of carbohydrates via glycolysis. The chain is Enolase from Buchnera aphidicola subsp. Acyrthosiphon pisum (strain APS) (Acyrthosiphon pisum symbiotic bacterium).